The chain runs to 306 residues: Ribosomal protein L11 methyltransferase (306 aa).

Threonine 152, glycine 179, aspartate 201, and asparagine 243 together coordinate S-adenosyl-L-methionine.

It belongs to the methyltransferase superfamily. PrmA family.

The protein resides in the cytoplasm. The enzyme catalyses L-lysyl-[protein] + 3 S-adenosyl-L-methionine = N(6),N(6),N(6)-trimethyl-L-lysyl-[protein] + 3 S-adenosyl-L-homocysteine + 3 H(+). Its function is as follows. Methylates ribosomal protein L11. The protein is Ribosomal protein L11 methyltransferase of Citrifermentans bemidjiense (strain ATCC BAA-1014 / DSM 16622 / JCM 12645 / Bem) (Geobacter bemidjiensis).